We begin with the raw amino-acid sequence, 175 residues long: ATP-dependent protease subunit HslV (175 aa).

The active site involves T2. Na(+) is bound by residues G158, C161, and T164.

It belongs to the peptidase T1B family. HslV subfamily. As to quaternary structure, a double ring-shaped homohexamer of HslV is capped on each side by a ring-shaped HslU homohexamer. The assembly of the HslU/HslV complex is dependent on binding of ATP.

It is found in the cytoplasm. The enzyme catalyses ATP-dependent cleavage of peptide bonds with broad specificity.. With respect to regulation, allosterically activated by HslU binding. In terms of biological role, protease subunit of a proteasome-like degradation complex believed to be a general protein degrading machinery. The chain is ATP-dependent protease subunit HslV from Haemophilus influenzae (strain PittGG).